We begin with the raw amino-acid sequence, 340 residues long: Fructose-1,6-bisphosphatase class 1 (340 aa).

Residues Glu107, Asp126, Leu128, and Asp129 each contribute to the Mg(2+) site. Asn215 lines the substrate pocket. Glu287 provides a ligand contact to Mg(2+).

It belongs to the FBPase class 1 family. In terms of assembly, homotetramer. It depends on Mg(2+) as a cofactor.

The protein localises to the cytoplasm. It carries out the reaction beta-D-fructose 1,6-bisphosphate + H2O = beta-D-fructose 6-phosphate + phosphate. It participates in carbohydrate biosynthesis; gluconeogenesis. In Brucella suis biovar 1 (strain 1330), this protein is Fructose-1,6-bisphosphatase class 1.